The sequence spans 347 residues: MSEGEGQAKNRLFLGIDLGTSHTAVMSSRGKKFLLKSVVGYPKDVIGLKLLGRPYVVGDEAFEMRSYLDIRYPLQDGVLSEISDRDIEVARHLLTHVVKSAEPGPNDEICAVIGVPARASAANKALLLKMAQEVVHTALVVSEPFMVGYGLDKLINTIIVDIGAGTTDICALKGTVPGPEDQVTLTKAGNYVDERLQNAILERHPELQMNVNVACAVKEQFSFVGTPTEVASFEFRAAGKPVRADVTEPVKIACEALMPDIIESIETLLRSFQPEYQATVLQNIVFAGGGSRIRGLAAYVKEKLRPFGDANVTCVKDPTFDGCRGALRLAEELPPQYWRQLGDVSGS.

Residues Lys-9, 20–21 (TS), and Asp-76 contribute to the ATP site. Residue Glu-143 participates in Mg(2+) binding. Residues 164–166 (AGT), 218–222 (KEQFS), and Gly-289 contribute to the ATP site.

This sequence belongs to the FtsA/MreB family. MamK subfamily. In terms of assembly, forms cytoplasmic filaments. Filaments are parallel (polar) and double-helical. MamK subunits from each of the two strands are juxtaposed, each monomer binds ADP. At cell poles and septa interacts with methyl-accepting chemotaxis protein Amb0944 (MCP10). Forms filaments with MamK-like protein.

It localises to the cytoplasm. Its subcellular location is the cytoskeleton. It is found in the magnetosome membrane. It catalyses the reaction ATP + H2O = ADP + phosphate + H(+). Its activity is regulated as follows. Filament turnover is promoted by MamJ and/or LimJ which have overlapping function; at least one other protein is required for turnover. MamK filament dynamics are probably required for the assembly or maintenance of the magnetosome chain. Its function is as follows. Protein with ATPase activity which forms dynamic cytoplasmic filaments (probably with paralog MamK-like) that organize magnetosomes into long chains running parallel to the long axis of the cell. Turnover of MamK filaments is probably promoted by MamK-like, which provides a monomer pool. Forms twisted filaments in the presence of ATP or GTP. Serves to close gaps between magnetosomes in the chain. Interaction with MCP10 is involved in controlling the response to magnetic fields, possibly by controlling flagellar rotation. Expression in E.coli yields a filament in the cell's longitudinal axis; the protein nucleates at several sites and one extremity of the filament is located at the cell pole. The protein is Actin-like protein MamK (mamK) of Paramagnetospirillum magneticum (strain ATCC 700264 / AMB-1) (Magnetospirillum magneticum).